The primary structure comprises 259 residues: MLLAIDCGNTNTLFAIHDGNDWVAQWRSGTDSTRTADEHAVWLSQLMGLQGRSFADITACVISTVVPQALFNLRNLSRRYFKAEPVIVGEPGVRMDIEVRLDRPQDAGADRLVNALGARAVYDGALIIIDSGTATTFDVIAADGAFEGGIIAPGINLSMQALHGAAAKLPRVAIAKPARVMGKDTVSAMQSGVFWGYIDLIDGLVQRLKSEYAQPMTVVATGGVVSLFDGASKAIDHYDADLTIRGLLEVWKLNGGADT.

Aspartate 6–leucine 13 is a binding site for ATP. Substrate is bound at residue glycine 108–arginine 111. Residue aspartate 110 is the Proton acceptor of the active site. Residue aspartate 130 coordinates K(+). Threonine 133 contributes to the ATP binding site. Position 185 (threonine 185) interacts with substrate.

This sequence belongs to the type III pantothenate kinase family. Homodimer. Requires NH4(+) as cofactor. K(+) serves as cofactor.

The protein resides in the cytoplasm. It catalyses the reaction (R)-pantothenate + ATP = (R)-4'-phosphopantothenate + ADP + H(+). It participates in cofactor biosynthesis; coenzyme A biosynthesis; CoA from (R)-pantothenate: step 1/5. Catalyzes the phosphorylation of pantothenate (Pan), the first step in CoA biosynthesis. The polypeptide is Type III pantothenate kinase (Maricaulis maris (strain MCS10) (Caulobacter maris)).